Here is a 534-residue protein sequence, read N- to C-terminus: MHDKILILDFGSQVTQLIARRVREAHVYCEIHPNDVSDEFIREFAPKGIILSGSHASTYEDHDLRAPQAVWELGVPVLGICYGMFTMVVQQGGEVEASAHREFGYAEVRAHGHTRLLQGIEDFSTPEGHGMLKVWMSHGDKVTKLPPGFKLMASTPSCPIAGMADESRGYYAVQFHPEVTHTVQGRALLERFVLEIAKAQPDWVMKDHVAEAVAAIRAQVGDEEVILGLSGGVDSSVAAALIHRAIGDRLTCVFVDHGLLRLNEGDMVMEMFAGKLHAKVVRVDAAELFMNELAGVADPEAKRKIIGRLFVDVFKAEAAKLKASGAGHRGATFLAQGTIYPDVIESGGAKTKKATTIKSHHNVGGLPEQLGLKLLEPLRDLFKDEVRELGVALGLPHDMVYRHPFPGPGLGVRILGEVKKDYADLLRRADAIFIEELRNTVDPASGKTWYELTSQAFAVFLPVKSVGVMGDGRTYDYVVALRAVQTSDFMTADWAELPYALLKRTSGRIINEVRGINRVTYDVSSKPPATIEWE.

Positions 4–202 (KILILDFGSQ…VLEIAKAQPD (199 aa)) constitute a Glutamine amidotransferase type-1 domain. Residue C81 is the Nucleophile of the active site. Residues H176 and E178 contribute to the active site. The 200-residue stretch at 203-402 (WVMKDHVAEA…LGLPHDMVYR (200 aa)) folds into the GMPS ATP-PPase domain. 230 to 236 (SGGVDSS) contributes to the ATP binding site.

In terms of assembly, homodimer.

It carries out the reaction XMP + L-glutamine + ATP + H2O = GMP + L-glutamate + AMP + diphosphate + 2 H(+). Its pathway is purine metabolism; GMP biosynthesis; GMP from XMP (L-Gln route): step 1/1. Its function is as follows. Catalyzes the synthesis of GMP from XMP. This is GMP synthase [glutamine-hydrolyzing] from Methylibium petroleiphilum (strain ATCC BAA-1232 / LMG 22953 / PM1).